The primary structure comprises 144 residues: Large ribosomal subunit protein uL15 (144 aa).

The tract at residues 1-49 (MRLNTLSPAAGAKSAAKRVGRGIGSGTGKTCGRGHKGQKSRSGGGVRVG) is disordered. Positions 21 to 31 (RGIGSGTGKTC) are enriched in gly residues.

Belongs to the universal ribosomal protein uL15 family. Part of the 50S ribosomal subunit.

Its function is as follows. Binds to the 23S rRNA. In Shewanella sediminis (strain HAW-EB3), this protein is Large ribosomal subunit protein uL15.